A 520-amino-acid chain; its full sequence is Polycomb protein PHO (520 aa).

C2H2-type zinc fingers lie at residues 357–381, 386–408, 414–438, and 444–468; these read IACP…LHTH, HVCA…QLVH, FQCT…VRIH, and FVCP…ILTH. The segment at 475–497 is disordered; it reads TSISGKSGCSNAESNSQSEDTSA.

As to quaternary structure, component of the Esc/E(z) complex, composed of Esc, E(z), Su(z)12, HDAC1/Rpd3 and Caf1-55. This complex is distinct from the PRC1 complex, which contains many other PcG proteins like Pc, Ph, Psc, Su(z)2. The two complexes however cooperate and interact together during the first 3 hours of development to establish PcG silencing. Component of the chromatin remodeling Ino80 complex. Interacts with Sfmbt to form a pho-repressive complex (PhoRC).

Its subcellular location is the nucleus. Functionally, polycomb group (PcG) protein that binds to the 5'-CNGCCATNNNNG-3' sequence found in the regulatory regions of many genes. PcG proteins act by forming multiprotein complexes, which are required to maintain the transcriptionally repressive state of homeotic genes throughout development. PcG proteins are not required to initiate repression, but to maintain it during later stages of development. They probably act via the methylation of histones, rendering chromatin heritably changed in its expressibility. Probably targets the Esc/E(z) complex to DNA. Necessary but not sufficient to recruit a functional PcG repressive complex that represses target genes, suggesting that the recruitment of the distinct PRC1 complex is also required to allow a subsequent repression. Its function is as follows. Proposed core component of the chromatin remodeling Ino80 complex which is involved in transcriptional regulation, DNA replication and probably DNA repair. The polypeptide is Polycomb protein PHO (pho) (Drosophila melanogaster (Fruit fly)).